Reading from the N-terminus, the 357-residue chain is Putative ankyrin repeat protein L42 (357 aa).

ANK repeat units lie at residues 34–63 (SCKQ…NLKF), 86–115 (EQNE…DFRM), 116–145 (NDDE…NIRA), 147–175 (NNRP…SFVS), 176–205 (KQNE…DINV), 206–235 (GKIP…SINK), 237–265 (SVDS…EVNI), 267–294 (YYAF…ITKD), and 301–331 (NTRY…DKDK).

This Acanthamoeba polyphaga (Amoeba) protein is Putative ankyrin repeat protein L42.